The chain runs to 218 residues: Small ribosomal subunit protein uS3 (218 aa).

In terms of domain architecture, KH type-2 spans 38–106; that stretch reads LRSDLKKKLM…PVHLNIEEVK (69 aa).

This sequence belongs to the universal ribosomal protein uS3 family. In terms of assembly, part of the 30S ribosomal subunit. Forms a tight complex with proteins S10 and S14.

In terms of biological role, binds the lower part of the 30S subunit head. Binds mRNA in the 70S ribosome, positioning it for translation. The sequence is that of Small ribosomal subunit protein uS3 from Legionella pneumophila (strain Lens).